We begin with the raw amino-acid sequence, 318 residues long: Petal death protein (318 aa).

Residues 1–3 (MAP) constitute a propeptide, removed in mature form. The disordered stretch occupies residues 1 to 24 (MAPPNGTTNGETEVATQGSYTAVS). Mg(2+) is bound by residues aspartate 107, aspartate 109, and lysine 142.

Belongs to the isocitrate lyase/PEP mutase superfamily. As to quaternary structure, homodimer and homotetramer formed by a dimer of homodimer. Mg(2+) is required as a cofactor. Mn(2+) serves as cofactor. Requires Fe(2+) as cofactor. The cofactor is Co(2+). As to expression, accumulates in senescing flower petals.

It carries out the reaction oxaloacetate + H2O = oxalate + acetate + H(+). Functionally, catalyzes cleavage of the C(2)-C(3) bond in oxaloacetate and in (2R)-alkyl malate derivatives to form oxalate and acetate, and alkyl carboxylates and R-ketocarboxylates, respectively. The polypeptide is Petal death protein (Dianthus caryophyllus (Carnation)).